A 259-amino-acid chain; its full sequence is Large ribosomal subunit protein uL3m (259 aa).

The transit peptide at 1–15 (MQSRFLISPTLIRTF) directs the protein to the mitochondrion. The span at 176 to 197 (ASHGASLSHRTPGSTGQNTTPS) shows a compositional bias: polar residues. A disordered region spans residues 176-208 (ASHGASLSHRTPGSTGQNTTPSRVLPGRKMAGH).

The protein belongs to the universal ribosomal protein uL3 family. As to quaternary structure, component of the mitochondrial large ribosomal subunit (mt-LSU). Mature yeast 74S mitochondrial ribosomes consist of a small (37S) and a large (54S) subunit. The 37S small subunit contains a 15S ribosomal RNA (15S mt-rRNA) and at least 32 different proteins. The 54S large subunit contains a 21S rRNA (21S mt-rRNA) and at least 45 different proteins.

It is found in the cytoplasm. Its subcellular location is the mitochondrion. Component of the mitochondrial ribosome (mitoribosome), a dedicated translation machinery responsible for the synthesis of mitochondrial genome-encoded proteins, including at least some of the essential transmembrane subunits of the mitochondrial respiratory chain. The mitoribosomes are attached to the mitochondrial inner membrane and translation products are cotranslationally integrated into the membrane. The chain is Large ribosomal subunit protein uL3m (mrpl9) from Schizosaccharomyces pombe (strain 972 / ATCC 24843) (Fission yeast).